The following is a 69-amino-acid chain: Calcium-binding protein (69 aa).

EF-hand domains follow at residues 2–37 (VNRT…VNCP) and 38–69 (FKKE…VLCS). Ca(2+)-binding residues include Asp-15, Asp-17, Ser-19, Lys-21, Glu-26, Asp-51, Asp-53, Asp-55, Gln-57, and Glu-62.

This is Calcium-binding protein from Schistosoma mansoni (Blood fluke).